The sequence spans 284 residues: 2,3,4,5-tetrahydropyridine-2,6-dicarboxylate N-succinyltransferase (284 aa).

Substrate contacts are provided by Arg-111 and Asp-148.

It belongs to the transferase hexapeptide repeat family. As to quaternary structure, homotrimer.

The protein resides in the cytoplasm. The catalysed reaction is (S)-2,3,4,5-tetrahydrodipicolinate + succinyl-CoA + H2O = (S)-2-succinylamino-6-oxoheptanedioate + CoA. It functions in the pathway amino-acid biosynthesis; L-lysine biosynthesis via DAP pathway; LL-2,6-diaminopimelate from (S)-tetrahydrodipicolinate (succinylase route): step 1/3. This chain is 2,3,4,5-tetrahydropyridine-2,6-dicarboxylate N-succinyltransferase, found in Chelativorans sp. (strain BNC1).